The sequence spans 86 residues: Large ribosomal subunit protein bL27 (86 aa).

The tract at residues 1 to 26 (MATKKAGGSSRNGRDSAGRRLGVKQS) is disordered.

Belongs to the bacterial ribosomal protein bL27 family.

The protein is Large ribosomal subunit protein bL27 of Rickettsia canadensis (strain McKiel).